The primary structure comprises 331 residues: MAVFTTVSQDEIARWLLDFNLGEVRELRGIASGIENSNFFLTTEHDGQTRQYVLTIFERLTFAQLPYYLHLMAHLAERGIRVPAPIPARDGEILRPLKGKPATIVTRLPGASQLAPDAQHCAEVGDMLARMHLAGQDYPRQQPNLRSLPWWRQTEPEILPFLDAGQRALLQQEIAHQAAFFASTDYAGLGSGPCHCDLFRDNALFEEDGSGRHRLGGFFDFYFAGNDKWLFDVAVTVNDWCIDLASGELDPARTQALLRAYHAVRPLTATEAAHWQDMLRAGALRFWVSRLWDFYLPREADMLQPHDPTHFERILRRRIGADPASAPLPWI.

The protein belongs to the pseudomonas-type ThrB family.

It carries out the reaction L-homoserine + ATP = O-phospho-L-homoserine + ADP + H(+). It functions in the pathway amino-acid biosynthesis; L-threonine biosynthesis; L-threonine from L-aspartate: step 4/5. The chain is Homoserine kinase from Cupriavidus necator (strain ATCC 17699 / DSM 428 / KCTC 22496 / NCIMB 10442 / H16 / Stanier 337) (Ralstonia eutropha).